Here is a 106-residue protein sequence, read N- to C-terminus: uncharacterized protein (106 aa).

The protein belongs to the csb family.

This is an uncharacterized protein from Dictyostelium discoideum (Social amoeba).